The sequence spans 193 residues: dCTP deaminase (193 aa).

Residues 110–115 (RSSLAR), aspartate 128, 136–138 (VLE), tyrosine 171, lysine 178, and glutamine 182 each bind dCTP. The active-site Proton donor/acceptor is glutamate 138.

Belongs to the dCTP deaminase family. As to quaternary structure, homotrimer.

It catalyses the reaction dCTP + H2O + H(+) = dUTP + NH4(+). Its pathway is pyrimidine metabolism; dUMP biosynthesis; dUMP from dCTP (dUTP route): step 1/2. Catalyzes the deamination of dCTP to dUTP. The polypeptide is dCTP deaminase (Tolumonas auensis (strain DSM 9187 / NBRC 110442 / TA 4)).